Consider the following 1589-residue polypeptide: Pentafunctional AROM polypeptide (1589 aa).

The tract at residues M1–D392 is 3-dehydroquinate synthase. NAD(+) is bound by residues D43–N45, E78–K81, G109–I111, and D114. Position 125 (R125) interacts with 7-phospho-2-dehydro-3-deoxy-D-arabino-heptonate. T134–S135 provides a ligand contact to NAD(+). The 7-phospho-2-dehydro-3-deoxy-D-arabino-heptonate site is built by D141 and K147. NAD(+) is bound at residue K156. N157 is a binding site for 7-phospho-2-dehydro-3-deoxy-D-arabino-heptonate. Residues W174–T177 and N185 each bind NAD(+). Position 189 (E189) interacts with Zn(2+). 7-phospho-2-dehydro-3-deoxy-D-arabino-heptonate contacts are provided by residues E189 to K192 and K258. Catalysis depends on E268, which acts as the Proton acceptor; for 3-dehydroquinate synthase activity. 7-phospho-2-dehydro-3-deoxy-D-arabino-heptonate-binding positions include R272–N276 and H279. H279 is a binding site for Zn(2+). H283 acts as the Proton acceptor; for 3-dehydroquinate synthase activity in catalysis. H295 and K364 together coordinate 7-phospho-2-dehydro-3-deoxy-D-arabino-heptonate. H295 lines the Zn(2+) pocket. The interval V405–A872 is EPSP synthase. The For EPSP synthase activity role is filled by C854. A shikimate kinase region spans residues S891–C1081. G896 to S903 is a binding site for ATP. The 3-dehydroquinase stretch occupies residues L1082–Q1294. H1199 (proton acceptor; for 3-dehydroquinate dehydratase activity) is an active-site residue. K1228 acts as the Schiff-base intermediate with substrate; for 3-dehydroquinate dehydratase activity in catalysis. The tract at residues S1307–D1589 is shikimate dehydrogenase.

It in the N-terminal section; belongs to the sugar phosphate cyclases superfamily. Dehydroquinate synthase family. In the 2nd section; belongs to the EPSP synthase family. This sequence in the 3rd section; belongs to the shikimate kinase family. The protein in the 4th section; belongs to the type-I 3-dehydroquinase family. It in the C-terminal section; belongs to the shikimate dehydrogenase family. In terms of assembly, homodimer. It depends on Zn(2+) as a cofactor.

Its subcellular location is the cytoplasm. It catalyses the reaction 7-phospho-2-dehydro-3-deoxy-D-arabino-heptonate = 3-dehydroquinate + phosphate. The catalysed reaction is 3-dehydroquinate = 3-dehydroshikimate + H2O. It carries out the reaction shikimate + NADP(+) = 3-dehydroshikimate + NADPH + H(+). The enzyme catalyses shikimate + ATP = 3-phosphoshikimate + ADP + H(+). It catalyses the reaction 3-phosphoshikimate + phosphoenolpyruvate = 5-O-(1-carboxyvinyl)-3-phosphoshikimate + phosphate. Its pathway is metabolic intermediate biosynthesis; chorismate biosynthesis; chorismate from D-erythrose 4-phosphate and phosphoenolpyruvate: step 2/7. It functions in the pathway metabolic intermediate biosynthesis; chorismate biosynthesis; chorismate from D-erythrose 4-phosphate and phosphoenolpyruvate: step 3/7. The protein operates within metabolic intermediate biosynthesis; chorismate biosynthesis; chorismate from D-erythrose 4-phosphate and phosphoenolpyruvate: step 4/7. It participates in metabolic intermediate biosynthesis; chorismate biosynthesis; chorismate from D-erythrose 4-phosphate and phosphoenolpyruvate: step 5/7. Its pathway is metabolic intermediate biosynthesis; chorismate biosynthesis; chorismate from D-erythrose 4-phosphate and phosphoenolpyruvate: step 6/7. Functionally, the AROM polypeptide catalyzes 5 consecutive enzymatic reactions in prechorismate polyaromatic amino acid biosynthesis. This is Pentafunctional AROM polypeptide from Zygosaccharomyces rouxii (strain ATCC 2623 / CBS 732 / NBRC 1130 / NCYC 568 / NRRL Y-229).